The sequence spans 1196 residues: Major DNA-binding protein (1196 aa).

The segment at 499 to 512 is a zinc-finger region; it reads CNLCTFETRHACAH. Short sequence motifs (required for filament formation) lie at residues 843-844 and 1142-1144; these read FW and FNF. Positions 1171 to 1196 are required for nuclear localization; sequence RKRAFHGDDPFGEGPPEKKDLTLDML. Positions 1176–1196 are disordered; sequence HGDDPFGEGPPEKKDLTLDML.

This sequence belongs to the herpesviridae major DNA-binding protein family. As to quaternary structure, homooligomers. Forms double-helical filaments necessary for the formation of replication compartments within the host nucleus. Interacts with the origin-binding protein. Interacts with the helicase primase complex; this interaction stimulates primer synthesis activity of the helicase-primase complex. Interacts with the DNA polymerase. Interacts with the alkaline exonuclease; this interaction increases its nuclease processivity.

The protein resides in the host nucleus. Its function is as follows. Plays several crucial roles in viral infection. Participates in the opening of the viral DNA origin to initiate replication by interacting with the origin-binding protein. May disrupt loops, hairpins and other secondary structures present on ssDNA to reduce and eliminate pausing of viral DNA polymerase at specific sites during elongation. Promotes viral DNA recombination by performing strand-transfer, characterized by the ability to transfer a DNA strand from a linear duplex to a complementary single-stranded DNA circle. Can also catalyze the renaturation of complementary single strands. Additionally, reorganizes the host cell nucleus, leading to the formation of prereplicative sites and replication compartments. This process is driven by the protein which can form double-helical filaments in the absence of DNA. This is Major DNA-binding protein from Human herpesvirus 2 (strain HG52) (HHV-2).